The sequence spans 302 residues: Protein transport protein SEC13 homolog B (302 aa).

WD repeat units follow at residues 9-48, 54-95, 101-142, 148-201, 208-251, and 257-296; these read GHEDIVHDVQMDYYGKRIATASSDCTIKITGVSNNGGSQQ, GHRG…QWTQ, DHKS…GWDT, AHPV…WKMD, KHTD…EQWE, and DFMTPVWRVSWSLTGNLLAVSDGNNNVTVWKEAVDGEWEQ.

This sequence belongs to the WD repeat SEC13 family. In terms of assembly, part of the nuclear pore complex (NPC). The NPC has an eight-fold symmetrical structure comprising a central transport channel and two rings, the cytoplasmic and nuclear rings, to which eight filaments are attached. The cytoplasmic filaments have loose ends, while the nuclear filaments are joined in a distal ring, forming a nuclear basket. NPCs are highly dynamic in configuration and composition, and can be devided in 3 subcomplexes, the NUP62 subcomplex, the NUP107-160 subcomplex and the NUP93 subcomplex, containing approximately 30 different nucleoporin proteins. Interacts with MAG5, SEC31A and SEC31B.

Its subcellular location is the golgi apparatus. It is found in the endoplasmic reticulum. The protein resides in the nucleus envelope. The protein localises to the nucleus. It localises to the nuclear pore complex. In terms of biological role, required for protein transport from the endoplasmic reticulum to the Golgi apparatus. This chain is Protein transport protein SEC13 homolog B, found in Arabidopsis thaliana (Mouse-ear cress).